Reading from the N-terminus, the 400-residue chain is Enoyl-[acyl-carrier-protein] reductase [NADH] (400 aa).

Residues 48–53 (GSSSGY), 74–75 (FE), 111–112 (DA), and 139–140 (LA) each bind NAD(+). Y225 is a substrate binding site. The Proton donor role is filled by Y235. NAD(+)-binding positions include K244 and 273–275 (VVT).

Belongs to the TER reductase family. Monomer.

It catalyses the reaction a 2,3-saturated acyl-[ACP] + NAD(+) = a (2E)-enoyl-[ACP] + NADH + H(+). It participates in lipid metabolism; fatty acid biosynthesis. Involved in the final reduction of the elongation cycle of fatty acid synthesis (FAS II). Catalyzes the reduction of a carbon-carbon double bond in an enoyl moiety that is covalently linked to an acyl carrier protein (ACP). This is Enoyl-[acyl-carrier-protein] reductase [NADH] from Shewanella baltica (strain OS185).